The chain runs to 131 residues: Interleukin-13 (131 aa).

Residues 1-18 (MALWVTAVLALACLGGLA) form the signal peptide. N-linked (GlcNAc...) asparagine glycans are attached at residues Asn42, Asn53, Asn76, and Asn121. 2 disulfide bridges follow: Cys52–Cys80 and Cys68–Cys94.

Belongs to the IL-4/IL-13 family. Interacts with IL13RA2.

The protein localises to the secreted. Functionally, cytokine that plays important roles in allergic inflammation and immune response to parasite infection. Synergizes with IL2 in regulating interferon-gamma synthesis. Stimulates B-cell proliferation, and activation of eosinophils, basophils, and mast cells. Plays an important role in controlling IL33 activity by modulating the production of transmembrane and soluble forms of interleukin-1 receptor-like 1/IL1RL1. Displays the capacity to antagonize Th1-driven proinflammatory immune response and downregulates synthesis of many proinflammatory cytokines including IL1, IL6, IL10, IL12 and TNF-alpha through a mechanism that partially involves suppression of NF-kappa-B. Also functions on nonhematopoietic cells, including endothelial cells where it induces vascular cell adhesion protein 1/VCAM1, which is important in the recruitment of eosinophils. Exerts its biological effects through its receptors which comprises the IL4R chain and the IL13RA1 chain, to activate JAK1 and TYK2, leading to the activation of STAT6. Aside from IL13RA1, another receptor IL13RA2 acts as a high affinity decoy for IL13 and mediates internalization and depletion of extracellular IL13. The polypeptide is Interleukin-13 (Il13) (Rattus norvegicus (Rat)).